The sequence spans 166 residues: NAD(P)H-quinone oxidoreductase subunit I, chloroplastic (166 aa).

4Fe-4S ferredoxin-type domains lie at 55–84 (GRIH…VDWK) and 95–124 (LNYS…MTEE). [4Fe-4S] cluster is bound by residues Cys-64, Cys-67, Cys-70, Cys-74, Cys-104, Cys-107, Cys-110, and Cys-114.

Belongs to the complex I 23 kDa subunit family. As to quaternary structure, NDH is composed of at least 16 different subunits, 5 of which are encoded in the nucleus. The cofactor is [4Fe-4S] cluster.

Its subcellular location is the plastid. The protein resides in the chloroplast thylakoid membrane. It catalyses the reaction a plastoquinone + NADH + (n+1) H(+)(in) = a plastoquinol + NAD(+) + n H(+)(out). The catalysed reaction is a plastoquinone + NADPH + (n+1) H(+)(in) = a plastoquinol + NADP(+) + n H(+)(out). In terms of biological role, NDH shuttles electrons from NAD(P)H:plastoquinone, via FMN and iron-sulfur (Fe-S) centers, to quinones in the photosynthetic chain and possibly in a chloroplast respiratory chain. The immediate electron acceptor for the enzyme in this species is believed to be plastoquinone. Couples the redox reaction to proton translocation, and thus conserves the redox energy in a proton gradient. This is NAD(P)H-quinone oxidoreductase subunit I, chloroplastic from Melampodium leucanthum (Black foot daisy).